Reading from the N-terminus, the 358-residue chain is Protein SGT1 homolog B (358 aa).

TPR repeat units lie at residues 2 to 35, 37 to 69, and 70 to 103; these read AKELAEKAKEAFLDDDFDVAVDLYSKAIDLDPNC, AFFADRAQANIKIDNFTEAVVDANKAIELEPTL, and AKAYLRKGTACMKLEEYSTAKAALEKGASVAPNE. The CS domain maps to 157 to 246; the sequence is KPMFRHEFYQ…AEIITWASLE (90 aa). Residues 255 to 275 are disordered; that stretch reads PKPNVSSALSQRPVYPSSKPA. The SGS domain maps to 268–358; it reads VYPSSKPAKD…DGMELKKWEY (91 aa).

It belongs to the SGT1 family. Interacts with RAR1 and HSP90-2. Interacts (via SGS domain) with HSC70-1 and HSC70-3.

It is found in the cytoplasm. The protein resides in the nucleus. In terms of biological role, involved in plant innate immunity. Essential for race-specific resistance conferred by multiple R genes, including RPP7, recognizing different oomycete pathogen isolates like avirulent Hyaloperonospora arabidopsidis (downy mildew). Contributes additively with RAR1 to RPP5-dependent resistance. Not required for RPM1, RPS2, RPS4 and RPS5-mediated resistance. Functions as a negative regulator of RPS5 accumulation by assisting its degradation. May be involved in heat shock response by associating with HSC70-1 chaperone. Required for the SCF(TIR1)-mediated degradation of Aux/IAA proteins, but maybe not for SCF(TIR1) assembly or binding to its Aux/IAA substrates. Probably required for SCF-mediated ubiquitination, by coupling HSP90 to SCF complex for ubiquitination of HSP90 client proteins. Required for the coronatine/jasmonic acid-mediated signal transduction pathway. The chain is Protein SGT1 homolog B from Arabidopsis thaliana (Mouse-ear cress).